A 133-amino-acid chain; its full sequence is UPF0292 protein TON_0187 (133 aa).

The region spanning 20–100 (EGAIIVEGPR…RVDSETRKEL (81 aa)) is the Toprim domain. Positions 26, 69, and 71 each coordinate Mg(2+).

The protein belongs to the UPF0292 family. Requires Mg(2+) as cofactor.

This is UPF0292 protein TON_0187 from Thermococcus onnurineus (strain NA1).